The sequence spans 203 residues: Nucleoside triphosphate pyrophosphatase (203 aa).

Asp-78 serves as the catalytic Proton acceptor.

Belongs to the Maf family. A divalent metal cation serves as cofactor.

The protein resides in the cytoplasm. The catalysed reaction is a ribonucleoside 5'-triphosphate + H2O = a ribonucleoside 5'-phosphate + diphosphate + H(+). It carries out the reaction a 2'-deoxyribonucleoside 5'-triphosphate + H2O = a 2'-deoxyribonucleoside 5'-phosphate + diphosphate + H(+). Functionally, nucleoside triphosphate pyrophosphatase. May have a dual role in cell division arrest and in preventing the incorporation of modified nucleotides into cellular nucleic acids. This Prochlorococcus marinus (strain AS9601) protein is Nucleoside triphosphate pyrophosphatase.